Consider the following 256-residue polypeptide: NAD-dependent protein deacylase 2 (256 aa).

The Deacetylase sirtuin-type domain maps to 1–256 (MDSHSPIATV…MPQVVSHIYR (256 aa)). Residues 25–44 (GAGLSADSGMPTYRGLGGLY) and 108–111 (QNID) contribute to the NAD(+) site. His-128 serves as the catalytic Proton acceptor. Positions 136, 139, 158, and 161 each coordinate Zn(2+). NAD(+)-binding positions include 199–201 (GTT), 225–227 (NPG), and Ala-243.

The protein belongs to the sirtuin family. Class III subfamily. Zn(2+) serves as cofactor.

The protein localises to the cytoplasm. The enzyme catalyses N(6)-acetyl-L-lysyl-[protein] + NAD(+) + H2O = 2''-O-acetyl-ADP-D-ribose + nicotinamide + L-lysyl-[protein]. NAD-dependent protein deacetylase which modulates the activities of several proteins which are inactive in their acetylated form. This Pseudomonas aeruginosa (strain ATCC 15692 / DSM 22644 / CIP 104116 / JCM 14847 / LMG 12228 / 1C / PRS 101 / PAO1) protein is NAD-dependent protein deacylase 2 (cobB2).